The primary structure comprises 67 residues: Sec-independent protein translocase protein TatA (67 aa).

Residues 1 to 21 (MFGIGIQELLVVLVLVLLVFG) traverse the membrane as a helical segment. The disordered stretch occupies residues 46-67 (PDEIDITPGKKNGKTDKDDKQA). Basic and acidic residues predominate over residues 58–67 (GKTDKDDKQA).

It belongs to the TatA/E family. In terms of assembly, the Tat system comprises two distinct complexes: a TatABC complex, containing multiple copies of TatA, TatB and TatC subunits, and a separate TatA complex, containing only TatA subunits. Substrates initially bind to the TatABC complex, which probably triggers association of the separate TatA complex to form the active translocon.

It is found in the cell inner membrane. Part of the twin-arginine translocation (Tat) system that transports large folded proteins containing a characteristic twin-arginine motif in their signal peptide across membranes. TatA could form the protein-conducting channel of the Tat system. The chain is Sec-independent protein translocase protein TatA from Nitratidesulfovibrio vulgaris (strain DSM 19637 / Miyazaki F) (Desulfovibrio vulgaris).